The primary structure comprises 314 residues: Methionyl-tRNA formyltransferase (314 aa).

113–116 (SLLP) contributes to the (6S)-5,6,7,8-tetrahydrofolate binding site.

It belongs to the Fmt family.

The catalysed reaction is L-methionyl-tRNA(fMet) + (6R)-10-formyltetrahydrofolate = N-formyl-L-methionyl-tRNA(fMet) + (6S)-5,6,7,8-tetrahydrofolate + H(+). Functionally, attaches a formyl group to the free amino group of methionyl-tRNA(fMet). The formyl group appears to play a dual role in the initiator identity of N-formylmethionyl-tRNA by promoting its recognition by IF2 and preventing the misappropriation of this tRNA by the elongation apparatus. The polypeptide is Methionyl-tRNA formyltransferase (Pseudomonas aeruginosa (strain ATCC 15692 / DSM 22644 / CIP 104116 / JCM 14847 / LMG 12228 / 1C / PRS 101 / PAO1)).